The following is a 152-amino-acid chain: Transcriptional regulator MraZ (152 aa).

2 consecutive SpoVT-AbrB domains span residues 5 to 52 (ASAV…PLNQ) and 81 to 124 (ATEC…SESE).

This sequence belongs to the MraZ family. In terms of assembly, forms oligomers.

The protein localises to the cytoplasm. It localises to the nucleoid. This chain is Transcriptional regulator MraZ, found in Histophilus somni (strain 129Pt) (Haemophilus somnus).